The chain runs to 671 residues: uncharacterized protein (671 aa).

A helical membrane pass occupies residues 39 to 56 (ATVTVVILLLILLLGWGY).

The protein localises to the membrane. This is an uncharacterized protein from Treponema pallidum (strain Nichols).